The chain runs to 179 residues: Large ribosomal subunit protein uL10 (179 aa).

Belongs to the universal ribosomal protein uL10 family. Part of the ribosomal stalk of the 50S ribosomal subunit. The N-terminus interacts with L11 and the large rRNA to form the base of the stalk. The C-terminus forms an elongated spine to which L12 dimers bind in a sequential fashion forming a multimeric L10(L12)X complex.

In terms of biological role, forms part of the ribosomal stalk, playing a central role in the interaction of the ribosome with GTP-bound translation factors. The polypeptide is Large ribosomal subunit protein uL10 (Mycolicibacterium gilvum (strain PYR-GCK) (Mycobacterium gilvum (strain PYR-GCK))).